A 492-amino-acid chain; its full sequence is Bifunctional purine biosynthesis protein PurH (492 aa).

The region spanning 1–144 (MKKAILSVSN…KNYKHVTTIV (144 aa)) is the MGS-like domain.

The protein belongs to the PurH family.

It catalyses the reaction (6R)-10-formyltetrahydrofolate + 5-amino-1-(5-phospho-beta-D-ribosyl)imidazole-4-carboxamide = 5-formamido-1-(5-phospho-D-ribosyl)imidazole-4-carboxamide + (6S)-5,6,7,8-tetrahydrofolate. It carries out the reaction IMP + H2O = 5-formamido-1-(5-phospho-D-ribosyl)imidazole-4-carboxamide. Its pathway is purine metabolism; IMP biosynthesis via de novo pathway; 5-formamido-1-(5-phospho-D-ribosyl)imidazole-4-carboxamide from 5-amino-1-(5-phospho-D-ribosyl)imidazole-4-carboxamide (10-formyl THF route): step 1/1. The protein operates within purine metabolism; IMP biosynthesis via de novo pathway; IMP from 5-formamido-1-(5-phospho-D-ribosyl)imidazole-4-carboxamide: step 1/1. The sequence is that of Bifunctional purine biosynthesis protein PurH from Staphylococcus aureus (strain USA300).